Consider the following 481-residue polypeptide: Dual specificity protein kinase CLK4 (481 aa).

2 disordered regions span residues 1-47 (MRHS…KPHH) and 102-143 (SKSS…EDDE). Residues 8–19 (HCPDWDSRESWG) are compositionally biased toward basic and acidic residues. Composition is skewed to basic residues over residues 106–119 (VRSR…KRNR) and 126–136 (SHSKSHRRKRS). Residues Ser136 and Ser138 each carry the phosphoserine modification. Positions 159 to 475 (YEIVDTLGEG…LDEALQHPFF (317 aa)) constitute a Protein kinase domain. Residues 165–173 (LGEGAFGKV) and Lys189 each bind ATP. Asp286 functions as the Proton acceptor in the catalytic mechanism.

It belongs to the protein kinase superfamily. CMGC Ser/Thr protein kinase family. Lammer subfamily. Interacts with UBL5. Autophosphorylates on all three types of residues. Expressed in the hippocampus, the cerebellum and the olfactory bulb.

Its subcellular location is the nucleus. The catalysed reaction is L-seryl-[protein] + ATP = O-phospho-L-seryl-[protein] + ADP + H(+). The enzyme catalyses L-threonyl-[protein] + ATP = O-phospho-L-threonyl-[protein] + ADP + H(+). It catalyses the reaction L-tyrosyl-[protein] + ATP = O-phospho-L-tyrosyl-[protein] + ADP + H(+). Its activity is regulated as follows. TG003 inhibits its kinase activity and affects the regulation of alternative splicing mediated by phosphorylation of SR proteins. In terms of biological role, dual specificity kinase acting on both serine/threonine and tyrosine-containing substrates. Phosphorylates serine- and arginine-rich (SR) proteins of the spliceosomal complex and may be a constituent of a network of regulatory mechanisms that enable SR proteins to control RNA splicing. Phosphorylates SRSF1 and SRSF3. Required for the regulation of alternative splicing of MAPT/TAU. Regulates the alternative splicing of tissue factor (F3) pre-mRNA in endothelial cells. This is Dual specificity protein kinase CLK4 (Clk4) from Mus musculus (Mouse).